The primary structure comprises 198 residues: Probable GTP-binding protein EngB (198 aa).

Residues 22–196 (NLSEIAFVGR…WNWIKGQAEL (175 aa)) form the EngB-type G domain. GTP-binding positions include 30-37 (GRSNVGKS), 57-61 (GKTQT), 75-78 (DVPG), 142-145 (TKAD), and 175-177 (FSA). Mg(2+) contacts are provided by S37 and T59.

Belongs to the TRAFAC class TrmE-Era-EngA-EngB-Septin-like GTPase superfamily. EngB GTPase family. Requires Mg(2+) as cofactor.

Functionally, necessary for normal cell division and for the maintenance of normal septation. The chain is Probable GTP-binding protein EngB from Oenococcus oeni (strain ATCC BAA-331 / PSU-1).